The following is a 171-amino-acid chain: ATP synthase subunit b (171 aa).

Residues I4–Q24 traverse the membrane as a helical segment.

This sequence belongs to the ATPase B chain family. In terms of assembly, F-type ATPases have 2 components, F(1) - the catalytic core - and F(0) - the membrane proton channel. F(1) has five subunits: alpha(3), beta(3), gamma(1), delta(1), epsilon(1). F(0) has three main subunits: a(1), b(2) and c(10-14). The alpha and beta chains form an alternating ring which encloses part of the gamma chain. F(1) is attached to F(0) by a central stalk formed by the gamma and epsilon chains, while a peripheral stalk is formed by the delta and b chains.

It localises to the cell inner membrane. In terms of biological role, f(1)F(0) ATP synthase produces ATP from ADP in the presence of a proton or sodium gradient. F-type ATPases consist of two structural domains, F(1) containing the extramembraneous catalytic core and F(0) containing the membrane proton channel, linked together by a central stalk and a peripheral stalk. During catalysis, ATP synthesis in the catalytic domain of F(1) is coupled via a rotary mechanism of the central stalk subunits to proton translocation. Its function is as follows. Component of the F(0) channel, it forms part of the peripheral stalk, linking F(1) to F(0). The polypeptide is ATP synthase subunit b (Helicobacter hepaticus (strain ATCC 51449 / 3B1)).